Here is a 269-residue protein sequence, read N- to C-terminus: Aquaporin-1 (269 aa).

The Cytoplasmic portion of the chain corresponds to 1-11; sequence MASEIKKKLFW. The helical transmembrane segment at 12–29 threads the bilayer; sequence RAVVAEFLAMTLFVFISI. Residues 30 to 46 are Extracellular-facing; the sequence is GSALGFNYPLERNQTLV. N-linked (GlcNAc...) asparagine glycosylation is present at Asn42. Residues 47–65 form a helical membrane-spanning segment; sequence QDNVKVSLAFGLSIATLAQ. Topologically, residues 66-68 are cytoplasmic; the sequence is SVG. The stretch at 69 to 82 is an intramembrane region; the sequence is HISGAHLNPAVTLG. The NPA 1 signature appears at 76–78; it reads NPA. Topologically, residues 83 to 90 are cytoplasmic; it reads LLLSCQIS. The chain crosses the membrane as a helical span at residues 91–109; it reads ILRAVMYIIAQCVGAIVAS. At 110–133 the chain is on the extracellular side; sequence AILSGITSSLLENSLGRNDLARGV. Residues 134-153 traverse the membrane as a helical segment; it reads NSGQGLGIEIIGTLQLVLCV. Over 154–163 the chain is Cytoplasmic; sequence LATTDRRRRD. The chain crosses the membrane as a helical span at residues 164–181; that stretch reads LGGSAPLAIGLSVALGHL. Over 182 to 186 the chain is Extracellular; that stretch reads LAIDY. An intramembrane segment occupies 187–199; that stretch reads TGCGINPARSFGS. An NPA 2 motif is present at residues 192 to 194; that stretch reads NPA. Over 200–206 the chain is Extracellular; it reads AVLTRNF. N-linked (GlcNAc...) asparagine glycosylation is present at Asn205. Residues 207–224 traverse the membrane as a helical segment; that stretch reads SNHWIFWVGPFIGSALAV. Topologically, residues 225–269 are cytoplasmic; it reads LIYDFILAPRSSDFTDRMKVWTSGQVEEYDLDADDINSRVEMKPK. The residue at position 247 (Ser247) is a Phosphoserine. A Phosphotyrosine modification is found at Tyr253. A Phosphoserine modification is found at Ser262.

This sequence belongs to the MIP/aquaporin (TC 1.A.8) family. In terms of assembly, homotetramer; each monomer provides an independent water pore. Component of the ankyrin-1 complex in the erythrocyte, composed of ANK1, RHCE, RHAG, SLC4A1, EPB42, GYPA, GYPB and AQP1. Interacts with EPHB2; involved in endolymph production in the inner ear. Identified in a complex with STOM. Interacts (via the N-terminal) with ANK1 (via ANK 1-5 repeats). Interacts (via the C-terminal) with EPB42. Erythrocytes and renal tubules.

The protein resides in the cell membrane. The enzyme catalyses H2O(in) = H2O(out). It carries out the reaction nitric oxide(out) = nitric oxide(in). It catalyses the reaction CO2(out) = CO2(in). The catalysed reaction is glycerol(in) = glycerol(out). The enzyme catalyses H2O2(out) = H2O2(in). It carries out the reaction K(+)(in) = K(+)(out). It catalyses the reaction Na(+)(in) = Na(+)(out). Its function is as follows. Forms a water channel that facilitates the transport of water across cell membranes, playing a crucial role in water homeostasis in various tissues. Could also be permeable to small solutes including hydrogen peroxide, glycerol and gases such as amonnia (NH3), nitric oxide (NO) and carbon dioxide (CO2). Recruited to the ankyrin-1 complex, a multiprotein complex of the erythrocyte membrane, it could be part of a CO2 metabolon, linking facilitated diffusion of CO2 across the membrane, anion exchange of Cl(-)/HCO3(-) and interconversion of dissolved CO2 and carbonic acid in the cytosol. In vitro, it shows non-selective gated cation channel activity and may be permeable to cations like K(+) and Na(+) in vivo. This is Aquaporin-1 from Rattus norvegicus (Rat).